The sequence spans 372 residues: Cobalt-precorrin-5B C(1)-methyltransferase (372 aa).

This sequence belongs to the CbiD family.

The enzyme catalyses Co-precorrin-5B + S-adenosyl-L-methionine = Co-precorrin-6A + S-adenosyl-L-homocysteine. It participates in cofactor biosynthesis; adenosylcobalamin biosynthesis; cob(II)yrinate a,c-diamide from sirohydrochlorin (anaerobic route): step 6/10. Functionally, catalyzes the methylation of C-1 in cobalt-precorrin-5B to form cobalt-precorrin-6A. This is Cobalt-precorrin-5B C(1)-methyltransferase from Prochlorococcus marinus subsp. pastoris (strain CCMP1986 / NIES-2087 / MED4).